We begin with the raw amino-acid sequence, 108 residues long: Small ribosomal subunit protein uS17 (108 aa).

The protein belongs to the universal ribosomal protein uS17 family. Part of the 30S ribosomal subunit.

Its function is as follows. One of the primary rRNA binding proteins, it binds specifically to the 5'-end of 16S ribosomal RNA. The polypeptide is Small ribosomal subunit protein uS17 (Methanoregula boonei (strain DSM 21154 / JCM 14090 / 6A8)).